Reading from the N-terminus, the 396-residue chain is uncharacterized protein (396 aa).

[4Fe-4S] cluster is bound by residues Cys8, Cys14, Cys17, and Cys95. S-adenosyl-L-methionine-binding residues include Gln229, Tyr258, Glu279, and Asp325. Cys352 functions as the Nucleophile in the catalytic mechanism.

The protein belongs to the class I-like SAM-binding methyltransferase superfamily. RNA M5U methyltransferase family.

This is an uncharacterized protein from Chlamydia trachomatis serovar D (strain ATCC VR-885 / DSM 19411 / UW-3/Cx).